Consider the following 145-residue polypeptide: TFTNDESQHIHDVCGKIPVDQVGAEALGRLILVNPWTRRYFKSFGDLSSAEAIQHNPKVASHGAKVMHSIAEAVKHLDDLKAYYADLSTIHCKKLYVDPANFKLFGGIVSIVTGMHLGTDYTAQKQAAFEKFLHHVEAALATGYH.

In terms of domain architecture, Globin spans 1–145 (TFTNDESQHI…VEAALATGYH (145 aa)). Heme b contacts are provided by histidine 62 and histidine 91.

It belongs to the globin family. Major hemoglobin is a tetramer of two alpha-1 chains and two beta-1 chains. Red blood cells.

Involved in oxygen transport from the lung to the various peripheral tissues. This Triturus cristatus (Great crested newt) protein is Hemoglobin subunit beta-1 (HBB1).